The chain runs to 416 residues: Ribulose bisphosphate carboxylase large chain (416 aa).

Substrate-binding residues include Asn102 and Thr152. Residue Lys154 is the Proton acceptor of the active site. Position 156 (Lys156) interacts with substrate. Residues Lys180, Asp182, and Glu183 each contribute to the Mg(2+) site. Lys180 carries the N6-carboxylysine modification. The active-site Proton acceptor is the His273. Substrate contacts are provided by Arg274, His306, and Ser358.

Belongs to the RuBisCO large chain family. Type I subfamily. As to quaternary structure, heterohexadecamer of 8 large chains and 8 small chains; disulfide-linked. The disulfide link is formed within the large subunit homodimers. It depends on Mg(2+) as a cofactor. Post-translationally, the disulfide bond which can form in the large chain dimeric partners within the hexadecamer appears to be associated with oxidative stress and protein turnover.

The protein resides in the plastid. The protein localises to the chloroplast. The catalysed reaction is 2 (2R)-3-phosphoglycerate + 2 H(+) = D-ribulose 1,5-bisphosphate + CO2 + H2O. It catalyses the reaction D-ribulose 1,5-bisphosphate + O2 = 2-phosphoglycolate + (2R)-3-phosphoglycerate + 2 H(+). In terms of biological role, ruBisCO catalyzes two reactions: the carboxylation of D-ribulose 1,5-bisphosphate, the primary event in carbon dioxide fixation, as well as the oxidative fragmentation of the pentose substrate in the photorespiration process. Both reactions occur simultaneously and in competition at the same active site. This is Ribulose bisphosphate carboxylase large chain (rbcL) from Arthropteris beckleri (Fern).